Reading from the N-terminus, the 166-residue chain is Phospholipase A2 inhibitor clone 10 (166 aa).

An N-terminal signal peptide occupies residues 1–19 (MRLILLSSLLLLGIFLANG). Positions 46-161 (LKYSFLTVHR…CDDNLLVVCE (116 aa)) constitute a C-type lectin domain. Cystine bridges form between Cys-83–Cys-160 and Cys-138–Cys-152. N-linked (GlcNAc...) asparagine glycosylation is present at Asn-122.

The protein belongs to the alpha-type phospholipase A2 inhibitor family. In terms of assembly, homotrimer; non-covalently linked. Expressed by the liver.

It localises to the secreted. In terms of biological role, this phospholipase A2 inhibitor binds directly phospholipase A2 in the presence or absence of calcium. In Bothrops moojeni (Lance-headed viper), this protein is Phospholipase A2 inhibitor clone 10.